Reading from the N-terminus, the 396-residue chain is Elongation factor Tu (396 aa).

Residues 10 to 205 form the tr-type G domain; that stretch reads KPHVNIGTIG…AVDESIPDPV (196 aa). The G1 stretch occupies residues 19–26; it reads GHVDHGKT. 19–26 lines the GTP pocket; that stretch reads GHVDHGKT. Residue Thr26 coordinates Mg(2+). Residues 62–66 are G2; that stretch reads GITIN. The segment at 83 to 86 is G3; the sequence is DAPG. GTP contacts are provided by residues 83 to 87 and 138 to 141; these read DAPGH and NKAD. Positions 138 to 141 are G4; the sequence is NKAD. A G5 region spans residues 175–177; sequence SAL.

Belongs to the TRAFAC class translation factor GTPase superfamily. Classic translation factor GTPase family. EF-Tu/EF-1A subfamily. Monomer.

The protein resides in the cytoplasm. It carries out the reaction GTP + H2O = GDP + phosphate + H(+). Its function is as follows. GTP hydrolase that promotes the GTP-dependent binding of aminoacyl-tRNA to the A-site of ribosomes during protein biosynthesis. The sequence is that of Elongation factor Tu from Mycolicibacterium gilvum (strain PYR-GCK) (Mycobacterium gilvum (strain PYR-GCK)).